The primary structure comprises 242 residues: 1-(5-phosphoribosyl)-5-[(5-phosphoribosylamino)methylideneamino] imidazole-4-carboxamide isomerase (242 aa).

The active-site Proton acceptor is the D7. D129 serves as the catalytic Proton donor.

This sequence belongs to the HisA/HisF family.

It is found in the cytoplasm. The enzyme catalyses 1-(5-phospho-beta-D-ribosyl)-5-[(5-phospho-beta-D-ribosylamino)methylideneamino]imidazole-4-carboxamide = 5-[(5-phospho-1-deoxy-D-ribulos-1-ylimino)methylamino]-1-(5-phospho-beta-D-ribosyl)imidazole-4-carboxamide. It participates in amino-acid biosynthesis; L-histidine biosynthesis; L-histidine from 5-phospho-alpha-D-ribose 1-diphosphate: step 4/9. This Pseudoalteromonas translucida (strain TAC 125) protein is 1-(5-phosphoribosyl)-5-[(5-phosphoribosylamino)methylideneamino] imidazole-4-carboxamide isomerase.